We begin with the raw amino-acid sequence, 101 residues long: Integration host factor subunit beta (101 aa).

Residues 57-77 (PARAGRNPRTGAHVPVDQKSV) form a disordered region.

It belongs to the bacterial histone-like protein family. In terms of assembly, heterodimer of an alpha and a beta chain.

In terms of biological role, this protein is one of the two subunits of integration host factor, a specific DNA-binding protein that functions in genetic recombination as well as in transcriptional and translational control. This is Integration host factor subunit beta from Rhodopseudomonas palustris (strain HaA2).